The primary structure comprises 350 residues: Protein-glutamate methylesterase/protein-glutamine glutaminase (350 aa).

One can recognise a Response regulatory domain in the interval 5–122 (RVLCVDDSAL…REGMLAYSEL (118 aa)). Asp56 bears the 4-aspartylphosphate mark. One can recognise a CheB-type methylesterase domain in the interval 153–345 (LLSSEKLIAI…QRMLAQISAG (193 aa)). Active-site residues include Ser165, His191, and Asp287.

Belongs to the CheB family. In terms of processing, phosphorylated by CheA. Phosphorylation of the N-terminal regulatory domain activates the methylesterase activity.

It localises to the cytoplasm. It catalyses the reaction [protein]-L-glutamate 5-O-methyl ester + H2O = L-glutamyl-[protein] + methanol + H(+). It carries out the reaction L-glutaminyl-[protein] + H2O = L-glutamyl-[protein] + NH4(+). In terms of biological role, involved in chemotaxis. Part of a chemotaxis signal transduction system that modulates chemotaxis in response to various stimuli. Catalyzes the demethylation of specific methylglutamate residues introduced into the chemoreceptors (methyl-accepting chemotaxis proteins or MCP) by CheR. Also mediates the irreversible deamidation of specific glutamine residues to glutamic acid. Does not interact with the C-terminal pentapeptide of the chemoreceptors. The polypeptide is Protein-glutamate methylesterase/protein-glutamine glutaminase (Pectobacterium atrosepticum (strain SCRI 1043 / ATCC BAA-672) (Erwinia carotovora subsp. atroseptica)).